The sequence spans 217 residues: Yop proteins translocation protein R (217 aa).

The next 4 helical transmembrane spans lie at 11–31 (IIVLSLLTLLPLISVMATSFV), 53–73 (MAMYGLAIILSLYVMAPVGFA), 157–177 (IGFLIYLPFIVIDLVISNILL), and 181–201 (MMMVSPMTISLPFKLLLFVLL).

It belongs to the FliP/MopC/SpaP family.

It localises to the cell membrane. Component of the yop secretion machinery. May have a role in the negative pathway regulation of yop expression controlled by calcium. The protein is Yop proteins translocation protein R (yscR) of Yersinia pestis.